The chain runs to 626 residues: Endogenous retrovirus group S71 member 1 Env polyprotein (626 aa).

An N-terminal signal peptide occupies residues 1 to 38 (MGPEAWVRPLKTAPKPGEAIRLILFIYLSCFFLPVMSS). A surface protein region spans residues 39 to 438 (EPSYSFLLTS…PPELHPRLHQ (400 aa)). At 39–575 (EPSYSFLLTS…FNWNPWLTTL (537 aa)) the chain is on the extracellular side. The short motif at 302 to 305 (CWLC) is the CXXC element. The tract at residues 439–459 (AVPLLVPLLAGLSIAGSAAIG) is fusion peptide. The segment at 439–626 (AVPLLVPLLA…KTQYDTLVNN (188 aa)) is transmembrane protein. Residues 503-519 (LQNCRCLDLLFLSQGGL) carry the CKS-17 motif. An intrachain disulfide couples C520 to C527. Residues 520–528 (CAALGESCC) carry the CX6CC motif. The chain crosses the membrane as a helical span at residues 576–596 (ITGLAGPLLILLLSLIFGPCI). Over 597–626 (LNSFLNFIKQRIASVKLTYLKTQYDTLVNN) the chain is Cytoplasmic.

Belongs to the gamma type-C retroviral envelope protein family. HERV class-I T env subfamily. The CXXC motif is highly conserved across a broad range of retroviral envelope proteins. It is thought to participate in the formation of a labile disulfide bond possibly with the CX6CC motif present in the transmembrane domain. As to expression, expressed at higher level in thyroid. Expressed at lower level in adrenal, bone marrow, brain, breast, kidney, ovary, placenta, prostate, skin, testis and trachea.

It is found in the cell membrane. Retroviral envelope proteins mediate receptor recognition and membrane fusion during early infection. Endogenous envelope proteins may have kept, lost or modified their original function during evolution. This endogenous envelope protein has lost its original fusogenic properties. This is Endogenous retrovirus group S71 member 1 Env polyprotein (ERVS71-1) from Homo sapiens (Human).